The chain runs to 353 residues: UDP-N-acetylglucosamine--N-acetylmuramyl-(pentapeptide) pyrophosphoryl-undecaprenol N-acetylglucosamine transferase (353 aa).

UDP-N-acetyl-alpha-D-glucosamine-binding positions include 11–13 (SAG), Arg-164, Ser-194, and Gln-289.

This sequence belongs to the glycosyltransferase 28 family. MurG subfamily.

It is found in the cell membrane. The catalysed reaction is di-trans,octa-cis-undecaprenyl diphospho-N-acetyl-alpha-D-muramoyl-L-alanyl-D-glutamyl-meso-2,6-diaminopimeloyl-D-alanyl-D-alanine + UDP-N-acetyl-alpha-D-glucosamine = di-trans,octa-cis-undecaprenyl diphospho-[N-acetyl-alpha-D-glucosaminyl-(1-&gt;4)]-N-acetyl-alpha-D-muramoyl-L-alanyl-D-glutamyl-meso-2,6-diaminopimeloyl-D-alanyl-D-alanine + UDP + H(+). Its pathway is cell wall biogenesis; peptidoglycan biosynthesis. Functionally, cell wall formation. Catalyzes the transfer of a GlcNAc subunit on undecaprenyl-pyrophosphoryl-MurNAc-pentapeptide (lipid intermediate I) to form undecaprenyl-pyrophosphoryl-MurNAc-(pentapeptide)GlcNAc (lipid intermediate II). This chain is UDP-N-acetylglucosamine--N-acetylmuramyl-(pentapeptide) pyrophosphoryl-undecaprenol N-acetylglucosamine transferase, found in Clostridium kluyveri (strain ATCC 8527 / DSM 555 / NBRC 12016 / NCIMB 10680 / K1).